Here is a 345-residue protein sequence, read N- to C-terminus: UDP-3-O-acylglucosamine N-acyltransferase (345 aa).

The active-site Proton acceptor is H252.

It belongs to the transferase hexapeptide repeat family. LpxD subfamily. In terms of assembly, homotrimer.

The enzyme catalyses a UDP-3-O-[(3R)-3-hydroxyacyl]-alpha-D-glucosamine + a (3R)-hydroxyacyl-[ACP] = a UDP-2-N,3-O-bis[(3R)-3-hydroxyacyl]-alpha-D-glucosamine + holo-[ACP] + H(+). Its pathway is bacterial outer membrane biogenesis; LPS lipid A biosynthesis. Its function is as follows. Catalyzes the N-acylation of UDP-3-O-acylglucosamine using 3-hydroxyacyl-ACP as the acyl donor. Is involved in the biosynthesis of lipid A, a phosphorylated glycolipid that anchors the lipopolysaccharide to the outer membrane of the cell. The polypeptide is UDP-3-O-acylglucosamine N-acyltransferase (Rickettsia rickettsii).